A 300-amino-acid chain; its full sequence is 7-methylguanosine phosphate-specific 5'-nucleotidase (300 aa).

Residue Asp41 is the Nucleophile of the active site. Mg(2+) contacts are provided by Asp41 and Asp43. Asp43 functions as the Proton donor in the catalytic mechanism. Glu88 serves as a coordination point for CMP. Glu88 contacts N(7)-methyl-GMP. Residues 156–157 and Lys205 each bind substrate; that span reads SA. Residue Asp230 participates in Mg(2+) binding. Position 256 is an N6-acetyllysine (Lys256).

It belongs to the pyrimidine 5'-nucleotidase family. In terms of assembly, monomer.

The protein localises to the cytoplasm. The catalysed reaction is N(7)-methyl-GMP + H2O = N(7)-methylguanosine + phosphate. It carries out the reaction CMP + H2O = cytidine + phosphate. The enzyme catalyses a ribonucleoside 5'-phosphate + H2O = a ribonucleoside + phosphate. Functionally, specifically hydrolyzes 7-methylguanosine monophosphate (m(7)GMP) to 7-methylguanosine and inorganic phosphate. The specific activity for m(7)GMP may protect cells against undesired salvage of m(7)GMP and its incorporation into nucleic acids. Also has weak activity for CMP. UMP and purine nucleotides are poor substrates. The sequence is that of 7-methylguanosine phosphate-specific 5'-nucleotidase (NT5C3B) from Homo sapiens (Human).